A 104-amino-acid polypeptide reads, in one-letter code: Protein RnfH (104 aa).

Belongs to the UPF0125 (RnfH) family.

This Pseudomonas savastanoi pv. phaseolicola (strain 1448A / Race 6) (Pseudomonas syringae pv. phaseolicola (strain 1448A / Race 6)) protein is Protein RnfH.